A 91-amino-acid polypeptide reads, in one-letter code: MVRWTLWDTLAFLLLLSLLLPSLLIMFIPSTFKRPVSSWKALNLRKTLLMASSVRLKPLNCSRLPCVYAQETLTFLLTQKKTCVKNYVQKE.

Over 1–8 (MVRWTLWD) the chain is Periplasmic. A helical transmembrane segment spans residues 9-29 (TLAFLLLLSLLLPSLLIMFIP). At 30–91 (STFKRPVSSW…TCVKNYVQKE (62 aa)) the chain is on the cytoplasmic side.

This sequence belongs to the microvirus E protein family. As to quaternary structure, oligomerizes. Interacts (via N-terminal) with host SlyD; this interaction protects E from proteolysis and stabilizes the YES complex. Interacts (via transmembrane region) with host MraY; this interaction inhibits MraY by blocking lipid access to the active site. Part of the YES complex composed of 2 host Mray molecules, 2 lysis protein E molecules and 2 host SlyD molecules.

It is found in the host cell membrane. In terms of biological role, induces host cell lysis. Inhibits the host translocase MraY activity that catalyzes the synthesis of lipid I, a necessary step for the host cell wall biosynthesis. The protein is Lysis protein E (E) of Enterobacteria phage phiX174 (Isolate Sanger).